The following is a 686-amino-acid chain: Protein arginine N-methyltransferase 7 (686 aa).

SAM-dependent MTase PRMT-type domains follow at residues 5–352 and 357–686; these read SDDY…FSWW and DLSL…FKFD.

Belongs to the class I-like SAM-binding methyltransferase superfamily. Protein arginine N-methyltransferase family. PRMT7 subfamily.

Essential arginine methyltransferase that can both catalyze the formation of omega-N monomethylarginine (MMA) and symmetrical dimethylarginine (sDMA). Specifically mediates the symmetrical dimethylation of arginine residues in the small nuclear ribonucleoproteins SmD1 and SmD3. In Aedes aegypti (Yellowfever mosquito), this protein is Protein arginine N-methyltransferase 7 (Art7).